Reading from the N-terminus, the 359-residue chain is Molybdenum import ATP-binding protein ModC (359 aa).

In terms of domain architecture, ABC transporter spans methionine 1 to valine 233. Glycine 32–threonine 39 is an ATP binding site. The Mop domain occupies alanine 289–alanine 355.

This sequence belongs to the ABC transporter superfamily. Molybdate importer (TC 3.A.1.8) family. As to quaternary structure, the complex is composed of two ATP-binding proteins (ModC), two transmembrane proteins (ModB) and a solute-binding protein (ModA).

Its subcellular location is the cell inner membrane. It catalyses the reaction molybdate(out) + ATP + H2O = molybdate(in) + ADP + phosphate + H(+). In terms of biological role, part of the ABC transporter complex ModABC involved in molybdenum import. Responsible for energy coupling to the transport system. The chain is Molybdenum import ATP-binding protein ModC from Brucella melitensis biotype 1 (strain ATCC 23456 / CCUG 17765 / NCTC 10094 / 16M).